The sequence spans 800 residues: Transducin beta-like protein 3 (800 aa).

At A2 the chain carries N-acetylalanine. WD repeat units follow at residues 64–105 (EDQE…RLWK), 107–146 (IHTA…GTHH), 149–190 (GSPG…CLAV), 193–232 (AHYS…ATRT), 245–284 (LPEE…CVHA), 290–329 (GPGR…LRKQ), 332–372 (GYSE…CQIL), 374–413 (GHTD…EVAC), 419–459 (GHTH…LSKG), 477–516 (CHDK…LLGT), 519–560 (GHRR…KTFE), 562–602 (HDAS…RTLD), and 604–642 (HEDK…EQAE). S257 carries the phosphoserine modification. K407 is covalently cross-linked (Glycyl lysine isopeptide (Lys-Gly) (interchain with G-Cter in SUMO2)).

In terms of assembly, part of the small subunit (SSU) processome, composed of more than 70 proteins and the RNA chaperone small nucleolar RNA (snoRNA) U3.

The protein localises to the nucleus. It localises to the nucleolus. Functionally, part of the small subunit (SSU) processome, first precursor of the small eukaryotic ribosomal subunit. During the assembly of the SSU processome in the nucleolus, many ribosome biogenesis factors, an RNA chaperone and ribosomal proteins associate with the nascent pre-rRNA and work in concert to generate RNA folding, modifications, rearrangements and cleavage as well as targeted degradation of pre-ribosomal RNA by the RNA exosome. The sequence is that of Transducin beta-like protein 3 (TBL3) from Bos taurus (Bovine).